Consider the following 246-residue polypeptide: 5-oxoprolinase subunit A (246 aa).

This sequence belongs to the LamB/PxpA family. In terms of assembly, forms a complex composed of PxpA, PxpB and PxpC.

The catalysed reaction is 5-oxo-L-proline + ATP + 2 H2O = L-glutamate + ADP + phosphate + H(+). Functionally, catalyzes the cleavage of 5-oxoproline to form L-glutamate coupled to the hydrolysis of ATP to ADP and inorganic phosphate. The sequence is that of 5-oxoprolinase subunit A from Vibrio cholerae serotype O1 (strain M66-2).